A 432-amino-acid chain; its full sequence is Chorismate synthase aro-2 (432 aa).

Catalysis depends on residues H17, H106, and D367. Positions L406–Q432 are disordered. Residues Q408–Q432 show a composition bias toward polar residues.

Belongs to the chorismate synthase family. Homotetramer.

The catalysed reaction is 5-O-(1-carboxyvinyl)-3-phosphoshikimate = chorismate + phosphate. The enzyme catalyses FMNH2 + NADP(+) = FMN + NADPH + 2 H(+). It functions in the pathway metabolic intermediate biosynthesis; chorismate biosynthesis; chorismate from D-erythrose 4-phosphate and phosphoenolpyruvate: step 7/7. In terms of biological role, bifunctional chorismate synthase and flavin reductase that catalyzes the conversion of 5-enolpyruvylshikimate 3-phosphate (EPSP) to form chorismate, which is the last common intermediate in the synthesis of the three aromatic amino acids phenylalanine, tyrosine and tryptophan. Acts also as a flavin reductase (FR) able to generate reduced flavin mononucleotide in the presence of NADPH. This chain is Chorismate synthase aro-2, found in Neurospora crassa (strain ATCC 24698 / 74-OR23-1A / CBS 708.71 / DSM 1257 / FGSC 987).